We begin with the raw amino-acid sequence, 276 residues long: Large ribosomal subunit protein uL2 (276 aa).

Disordered stretches follow at residues 29 to 54 and 224 to 276; these read PEKSLTKGLTKKAGRNNNGRVTSRRR and AMNP…RGQR. Basic residues predominate over residues 256–276; sequence YKTRSKKKPSSKLIVKRRGQR.

This sequence belongs to the universal ribosomal protein uL2 family. As to quaternary structure, part of the 50S ribosomal subunit. Forms a bridge to the 30S subunit in the 70S ribosome.

In terms of biological role, one of the primary rRNA binding proteins. Required for association of the 30S and 50S subunits to form the 70S ribosome, for tRNA binding and peptide bond formation. It has been suggested to have peptidyltransferase activity; this is somewhat controversial. Makes several contacts with the 16S rRNA in the 70S ribosome. The protein is Large ribosomal subunit protein uL2 of Maridesulfovibrio salexigens (strain ATCC 14822 / DSM 2638 / NCIMB 8403 / VKM B-1763) (Desulfovibrio salexigens).